Here is a 410-residue protein sequence, read N- to C-terminus: Peptidase T (410 aa).

Zn(2+) is bound at residue His-79. Residue Asp-81 is part of the active site. Residue Asp-142 participates in Zn(2+) binding. The Proton acceptor role is filled by Glu-176. The Zn(2+) site is built by Glu-177, Asp-199, and His-381.

This sequence belongs to the peptidase M20B family. Zn(2+) is required as a cofactor.

The protein localises to the cytoplasm. It catalyses the reaction Release of the N-terminal residue from a tripeptide.. Its function is as follows. Cleaves the N-terminal amino acid of tripeptides. This chain is Peptidase T, found in Bacillus thuringiensis (strain Al Hakam).